The following is a 394-amino-acid chain: Glycerol-3-phosphate dehydrogenase [NAD(+)] 2 (394 aa).

Residues 41–46 (GSGNWG), Lys-152, and Ala-185 each bind NAD(+). Position 152 (Lys-152) interacts with substrate. Lys-243 acts as the Proton acceptor in catalysis. Positions 308 and 337 each coordinate NAD(+). 308-309 (RN) lines the substrate pocket.

Belongs to the NAD-dependent glycerol-3-phosphate dehydrogenase family.

It carries out the reaction sn-glycerol 3-phosphate + NAD(+) = dihydroxyacetone phosphate + NADH + H(+). This chain is Glycerol-3-phosphate dehydrogenase [NAD(+)] 2 (gpd2), found in Cyberlindnera jadinii (Torula yeast).